We begin with the raw amino-acid sequence, 396 residues long: MSRLQQVTVLGATGSVGLSSLDVIARHPDRYQVFALTGFTRMSELLALCVRHAPRFAVVPEAAAARTLQDDLRAAGLATQVLVGEEGLCQVSADAEVDTVVAAIVGAAGLRPTLAAVDAGKKILLANKEALVMSGALFMQAVRKSGAVLLPLDSEHNAIFQCMPGDYARGLSQVGVRRILLTASGGPFRKTPLAELEQVSPDQACAHPNWSMGRKISVDSASMMNKGLELIEACWLFDARPDQVEVVIHPQSVIHSLVDYVDGSVLAQLGNPDMRTPIANALAWPERIDSGVAPLDLFAVARLDFEAPDEQRFPCLRLARQAAEAGNSAPAMLNAANEVAVAAFLERRIRFPQIASIIEDVLALEPVVTVSDLGAVFEADTKARALAEQWLNRNVR.

Residues Thr13, Gly14, Ser15, Val16, and Asn127 each contribute to the NADPH site. 1-deoxy-D-xylulose 5-phosphate is bound at residue Lys128. Glu129 is an NADPH binding site. Asp153 lines the Mn(2+) pocket. 4 residues coordinate 1-deoxy-D-xylulose 5-phosphate: Ser154, Glu155, Ser184, and His207. A Mn(2+)-binding site is contributed by Glu155. Residue Gly213 participates in NADPH binding. Positions 220, 225, 226, and 229 each coordinate 1-deoxy-D-xylulose 5-phosphate. Residue Glu229 participates in Mn(2+) binding.

Belongs to the DXR family. The cofactor is Mg(2+). Requires Mn(2+) as cofactor.

The catalysed reaction is 2-C-methyl-D-erythritol 4-phosphate + NADP(+) = 1-deoxy-D-xylulose 5-phosphate + NADPH + H(+). The protein operates within isoprenoid biosynthesis; isopentenyl diphosphate biosynthesis via DXP pathway; isopentenyl diphosphate from 1-deoxy-D-xylulose 5-phosphate: step 1/6. Its function is as follows. Catalyzes the NADPH-dependent rearrangement and reduction of 1-deoxy-D-xylulose-5-phosphate (DXP) to 2-C-methyl-D-erythritol 4-phosphate (MEP). In Pseudomonas fluorescens (strain SBW25), this protein is 1-deoxy-D-xylulose 5-phosphate reductoisomerase.